Consider the following 238-residue polypeptide: 2-C-methyl-D-erythritol 4-phosphate cytidylyltransferase (238 aa).

Belongs to the IspD/TarI cytidylyltransferase family. IspD subfamily.

The enzyme catalyses 2-C-methyl-D-erythritol 4-phosphate + CTP + H(+) = 4-CDP-2-C-methyl-D-erythritol + diphosphate. It functions in the pathway isoprenoid biosynthesis; isopentenyl diphosphate biosynthesis via DXP pathway; isopentenyl diphosphate from 1-deoxy-D-xylulose 5-phosphate: step 2/6. In terms of biological role, catalyzes the formation of 4-diphosphocytidyl-2-C-methyl-D-erythritol from CTP and 2-C-methyl-D-erythritol 4-phosphate (MEP). The sequence is that of 2-C-methyl-D-erythritol 4-phosphate cytidylyltransferase from Shewanella amazonensis (strain ATCC BAA-1098 / SB2B).